The chain runs to 799 residues: ATP synthase subunit alpha (799 aa).

Positions M1–E549 are ATP synthase alpha chain. Residue G170 to T177 coordinates ATP. The unknown stretch occupies residues T550–K799.

It belongs to the ATPase alpha/beta chains family. F-type ATPases have 2 components, CF(1) - the catalytic core - and CF(0) - the membrane proton channel. CF(1) has five subunits: alpha(3), beta(3), gamma(1), delta(1), epsilon(1). CF(0) has three main subunits: a(1), b(2) and c(9-12). The alpha and beta chains form an alternating ring which encloses part of the gamma chain. CF(1) is attached to CF(0) by a central stalk formed by the gamma and epsilon chains, while a peripheral stalk is formed by the delta and b chains.

The protein resides in the cell membrane. The catalysed reaction is ATP + H2O + 4 H(+)(in) = ADP + phosphate + 5 H(+)(out). In terms of biological role, produces ATP from ADP in the presence of a proton gradient across the membrane. The alpha chain is a regulatory subunit. The protein is ATP synthase subunit alpha (atpA) of Ureaplasma parvum serovar 3 (strain ATCC 27815 / 27 / NCTC 11736).